We begin with the raw amino-acid sequence, 192 residues long: UPF0312 protein YPK_1931 (192 aa).

Residues methionine 1–alanine 23 form the signal peptide.

The protein belongs to the UPF0312 family. Type 1 subfamily.

The protein localises to the periplasm. This is UPF0312 protein YPK_1931 from Yersinia pseudotuberculosis serotype O:3 (strain YPIII).